An 88-amino-acid polypeptide reads, in one-letter code: Large ribosomal subunit protein bL31B (88 aa).

This sequence belongs to the bacterial ribosomal protein bL31 family. Type B subfamily. Part of the 50S ribosomal subunit.

The chain is Large ribosomal subunit protein bL31B from Corynebacterium efficiens (strain DSM 44549 / YS-314 / AJ 12310 / JCM 11189 / NBRC 100395).